We begin with the raw amino-acid sequence, 59 residues long: LQHRTFCKLPAEPGPCKASIPAFYYNWAAKKCQLFHYGGCKGNANRFSTIEKCRHACVG.

A BPTI/Kunitz inhibitor domain is found at 7-57 (CKLPAEPGPCKASIPAFYYNWAAKKCQLFHYGGCKGNANRFSTIEKCRHAC). Intrachain disulfides connect C7–C57, C16–C40, and C32–C53.

Belongs to the venom Kunitz-type family. As to expression, expressed by the venom gland.

The protein resides in the secreted. Serine protease inhibitor that inhibits trypsin. May also inhibit voltage-gated potassium channels (Kv). Binds transition metal ions such as copper and cobalt. The sequence is that of Kunitz-type serine protease inhibitor dendrotoxin E from Dendroaspis polylepis polylepis (Black mamba).